We begin with the raw amino-acid sequence, 117 residues long: UPF0342 protein BcerKBAB4_0767 (117 aa).

It belongs to the UPF0342 family.

This Bacillus mycoides (strain KBAB4) (Bacillus weihenstephanensis) protein is UPF0342 protein BcerKBAB4_0767.